Consider the following 192-residue polypeptide: UPF0149 protein KPN78578_32810 (192 aa).

The protein belongs to the UPF0149 family.

This chain is UPF0149 protein KPN78578_32810, found in Klebsiella pneumoniae subsp. pneumoniae (strain ATCC 700721 / MGH 78578).